Here is a 342-residue protein sequence, read N- to C-terminus: Alpha-(1,3)-fucosyltransferase 7 (342 aa).

The Cytoplasmic segment spans residues 1–14 (MNNAGHGPTRRLRG). A helical; Signal-anchor for type II membrane protein transmembrane segment spans residues 15 to 36 (LGVLAGVALLAALWLLWLLGSA). Topologically, residues 37-342 (PRGTPAPQPT…YEDLEGWFQA (306 aa)) are lumenal. Cysteines 68 and 76 form a disulfide. Asn81 is a glycosylation site (N-linked (GlcNAc...) asparagine). Cys211 and Cys214 are oxidised to a cystine. N-linked (GlcNAc...) asparagine glycosylation occurs at Asn291. Cys318 and Cys321 form a disulfide bridge.

It belongs to the glycosyltransferase 10 family. In terms of processing, N-glycosylated. Leukocytic/myeloid lineage cells.

The protein localises to the golgi apparatus. The protein resides in the golgi stack membrane. The catalysed reaction is an N-acetyl-alpha-neuraminyl-(2-&gt;3)-beta-D-galactosyl-(1-&gt;4)-N-acetyl-beta-D-glucosaminyl derivative + GDP-beta-L-fucose = an alpha-Neu5Ac-(2-&gt;3)-beta-D-Gal-(1-&gt;4)-[alpha-L-Fuc-(1-&gt;3)]-beta-D-GlcNAc derivative + GDP + H(+). The enzyme catalyses a neolactoside IV(3)-alpha-NeuAc-nLc4Cer + GDP-beta-L-fucose = a neolactoside IV(3)-alpha-NeuNAc,III(3)-alpha-Fuc-nLc4Cer + GDP + H(+). It carries out the reaction a neolactoside VI(3)-alpha-NeuNAc-nLc6Cer + GDP-beta-L-fucose = a neolactoside VI(3)-alpha-NeuAc,V(3)-alphaFuc-nLc6Cer + GDP + H(+). It catalyses the reaction an alpha-Neu5Ac-(2-&gt;3)-beta-D-Gal-(1-&gt;4)-beta-D-GlcNAc-(1-&gt;3)-beta-D-Gal-(1-&gt;4)-[alpha-L-Fuc-(1-&gt;3)]-beta-D-GlcNAc derivative + GDP-beta-L-fucose = an alpha-Neu5Ac-(2-&gt;3)-beta-D-Gal-(1-&gt;4)-[alpha-L-Fuc-(1-&gt;3)]-beta-D-GlcNAc-(1-&gt;3)-beta-D-Gal-(1-&gt;4)-[alpha-L-Fuc-(1-&gt;3)]-beta-D-GlcNAc derivative + GDP + H(+). The catalysed reaction is an alpha-Neu5Ac-(2-&gt;3)-beta-D-Gal-(1-&gt;4)-beta-D-GlcNAc6S derivative + GDP-beta-L-fucose = an alpha-Neu5Ac-(2-&gt;3)-beta-D-Gal-(1-&gt;4)-[alpha-L-Fuc-(1-&gt;3)]-beta-D-GlcNAc6S derivative + GDP + H(+). The enzyme catalyses alpha-Neu5Ac-(2-&gt;3)-beta-D-Gal-(1-&gt;4)-beta-D-GlcNAc-(1-&gt;3)-beta-D-Gal-(1-&gt;4)-D-Glc + GDP-beta-L-fucose = alpha-Neu5Ac-(2-&gt;3)-beta-D-Gal-(1-&gt;4)-[alpha-L-Fuc-(1-&gt;3)]-beta-D-GlcNAc-(1-&gt;3)-beta-D-Gal-(1-&gt;4)-D-Glc + GDP + H(+). It carries out the reaction alpha-Neu5Ac-(2-&gt;3)-beta-D-Gal-(1-&gt;4)-beta-D-GlcNAc-(1-&gt;3)-beta-D-Gal-(1-&gt;4)-[alpha-L-Fuc-(1-&gt;3)]-beta-D-GlcNAc-(1-&gt;3)-beta-D-Gal-(1-&gt;4)-beta-D-GlcNAc + GDP-beta-L-fucose = alpha-Neu5Ac-(2-&gt;3)-beta-D-Gal-(1-&gt;4)-[alpha-L-Fuc-(1-&gt;3)]-beta-D-GlcNAc-(1-&gt;3)-beta-D-Gal-(1-&gt;4)-[alpha-L-Fuc-(1-&gt;3)]-beta-D-GlcNAc-(1-&gt;3)-beta-D-Gal-(1-&gt;4)-beta-D-GlcNAc + GDP + H(+). It catalyses the reaction alpha-Neu5Ac-(2-&gt;3)-beta-D-Gal-(1-&gt;4)-beta-D-GlcNAc-(1-&gt;3)-beta-D-Gal-(1-&gt;4)-beta-D-GlcNAc-(1-&gt;3)-beta-D-Gal-(1-&gt;4)-beta-D-GlcNAc + GDP-beta-L-fucose = alpha-Neu5Ac-(2-&gt;3)-beta-D-Gal-(1-&gt;4)-[alpha-L-Fuc-(1-&gt;3)]-beta-D-GlcNAc-(1-&gt;3)-beta-D-Gal-(1-&gt;4)-beta-D-GlcNAc-(1-&gt;3)-beta-D-Gal-(1-&gt;4)-beta-D-GlcNAc + GDP + H(+). Its pathway is protein modification; protein glycosylation. With respect to regulation, inhibited by NaCl. Inhibited by GDP in a concentration dependent manner, with an IC(50) value of 93 uM. Also inhibited by GMP and GTP. Inhibited by N-ethylmaleimide. Activated by poly(ethylene glycol) by enhancing the thermal stability of FUT7. Activated by Mn2+, Ca2+, and Mg2+. Both panosialin A and B inhibit activity with IC(50) values of 4.8 and 5.3 ug/ml, respectively. Inhibited by gallic acid (GA) and (-)-epigallocatechin gallate (EGCG) in a time-dependent and irreversible manner with IC(50) values of 60 and 700 nM, respectively. Its function is as follows. Catalyzes the transfer of L-fucose, from a guanosine diphosphate-beta-L-fucose, to the N-acetyl glucosamine (GlcNAc) of a distal alpha2,3 sialylated lactosamine unit of a glycoprotein or a glycolipid-linked sialopolylactosamines chain through an alpha-1,3 glycosidic linkage and participates in the final fucosylation step in the biosynthesis of the sialyl Lewis X (sLe(x)), a carbohydrate involved in cell and matrix adhesion during leukocyte trafficking and fertilization. In vitro, also synthesizes sialyl-dimeric-Lex structures, from VIM-2 structures and both di-fucosylated and trifucosylated structures from mono-fucosylated precursors. However does not catalyze alpha 1-3 fucosylation when an internal alpha 1-3 fucosylation is present in polylactosamine chain and the fucosylation rate of the internal GlcNAc residues is reduced once fucose has been added to the distal GlcNAc. Also catalyzes the transfer of a fucose from GDP-beta-fucose to the 6-sulfated a(2,3)sialylated substrate to produce 6-sulfo sLex mediating significant L-selectin-dependent cell adhesion. Through sialyl-Lewis(x) biosynthesis, can control SELE- and SELP-mediated cell adhesion with leukocytes and allows leukocytes tethering and rolling along the endothelial tissue thereby enabling the leukocytes to accumulate at a site of inflammation. May enhance embryo implantation through sialyl Lewis X (sLeX)-mediated adhesion of embryo cells to endometrium. May affect insulin signaling by up-regulating the phosphorylation and expression of some signaling molecules involved in the insulin-signaling pathway through SLe(x) which is present on the glycans of the INSRR alpha subunit. In Homo sapiens (Human), this protein is Alpha-(1,3)-fucosyltransferase 7.